The sequence spans 392 residues: Succinate--CoA ligase [ADP-forming] subunit beta (392 aa).

One can recognise an ATP-grasp domain in the interval 9 to 248; the sequence is KGLFRDYGVS…LHEEDPTEVK (240 aa). ATP is bound by residues Lys-50, 57–59, Val-106, and Glu-111; that span reads GRG. The Mg(2+) site is built by Asn-203 and Asp-217. Substrate-binding positions include Asn-268 and 325–327; that span reads GIV.

This sequence belongs to the succinate/malate CoA ligase beta subunit family. In terms of assembly, heterotetramer of two alpha and two beta subunits. Requires Mg(2+) as cofactor.

It catalyses the reaction succinate + ATP + CoA = succinyl-CoA + ADP + phosphate. The catalysed reaction is GTP + succinate + CoA = succinyl-CoA + GDP + phosphate. Its pathway is carbohydrate metabolism; tricarboxylic acid cycle; succinate from succinyl-CoA (ligase route): step 1/1. Succinyl-CoA synthetase functions in the citric acid cycle (TCA), coupling the hydrolysis of succinyl-CoA to the synthesis of either ATP or GTP and thus represents the only step of substrate-level phosphorylation in the TCA. The beta subunit provides nucleotide specificity of the enzyme and binds the substrate succinate, while the binding sites for coenzyme A and phosphate are found in the alpha subunit. The polypeptide is Succinate--CoA ligase [ADP-forming] subunit beta (Salinibacter ruber (strain DSM 13855 / M31)).